A 296-amino-acid polypeptide reads, in one-letter code: Phosphoribosylaminoimidazole-succinocarboxamide synthase (296 aa).

This sequence belongs to the SAICAR synthetase family.

It carries out the reaction 5-amino-1-(5-phospho-D-ribosyl)imidazole-4-carboxylate + L-aspartate + ATP = (2S)-2-[5-amino-1-(5-phospho-beta-D-ribosyl)imidazole-4-carboxamido]succinate + ADP + phosphate + 2 H(+). It functions in the pathway purine metabolism; IMP biosynthesis via de novo pathway; 5-amino-1-(5-phospho-D-ribosyl)imidazole-4-carboxamide from 5-amino-1-(5-phospho-D-ribosyl)imidazole-4-carboxylate: step 1/2. This chain is Phosphoribosylaminoimidazole-succinocarboxamide synthase, found in Lachnospira eligens (strain ATCC 27750 / DSM 3376 / VPI C15-48 / C15-B4) (Eubacterium eligens).